A 21-amino-acid polypeptide reads, in one-letter code: Peptidyl-prolyl cis-trans isomerase (21 aa).

The disordered stretch occupies residues 1 to 21; sequence ENFKIKHTEPGLLSMANAGKN.

The protein belongs to the cyclophilin-type PPIase family. PPIase A subfamily.

It carries out the reaction [protein]-peptidylproline (omega=180) = [protein]-peptidylproline (omega=0). PPIases accelerate the folding of proteins. It catalyzes the cis-trans isomerization of proline imidic peptide bonds in oligopeptides. This Naegleria fowleri (Brain eating amoeba) protein is Peptidyl-prolyl cis-trans isomerase.